Here is a 369-residue protein sequence, read N- to C-terminus: 3,7-dimethylxanthine N-methyltransferase TCS1 (369 aa).

Residue Tyr24 participates in S-adenosyl-L-homocysteine binding. Thr31 lines the caffeine pocket. S-adenosyl-L-homocysteine contacts are provided by Cys66, Asn71, Asp103, Leu104, Ser138, and Phe139. Caffeine-binding residues include Tyr156, His159, and Trp160. Asn177 provides a ligand contact to Mg(2+). Arg225 is a binding site for caffeine. The Mg(2+) site is built by Asp263, Phe265, and Asn266. Position 321 (Phe321) interacts with caffeine.

Belongs to the methyltransferase superfamily. Type-7 methyltransferase family. It depends on Mg(2+) as a cofactor.

It carries out the reaction 1,7-dimethylxanthine + S-adenosyl-L-methionine = caffeine + S-adenosyl-L-homocysteine + H(+). The enzyme catalyses theobromine + S-adenosyl-L-methionine = caffeine + S-adenosyl-L-homocysteine + H(+). It catalyses the reaction 7-methylxanthine + S-adenosyl-L-methionine = theobromine + S-adenosyl-L-homocysteine + H(+). It functions in the pathway alkaloid biosynthesis. Its function is as follows. Involved in the biosynthesis of caffeine in cv. Puer. Involved in the biosynthesis of theacrine in cv. Kucha, a caffeine-like xanthine alkaloid with diverse beneficial biological activities including anti-depressive, sedative, and hypnotic activities, improving learning and memory, increasing exercise activity, and preventing nonalcoholic fatty liver disease. Catalyzes the conversion of 7-methylxanthine (7mX) to theobromine and of theobromine to caffeine. Has 3-N- and 1-N-methylation activity. The polypeptide is 3,7-dimethylxanthine N-methyltransferase TCS1 (Camellia sinensis var. assamica (Assam tea)).